We begin with the raw amino-acid sequence, 78 residues long: Defensin-like protein 173 (78 aa).

An N-terminal signal peptide occupies residues 1–23 (MAKAPSPLVFPIIFLIIFALVEP). 4 cysteine pairs are disulfide-bonded: Cys27/Cys71, Cys34/Cys56, Cys40/Cys65, and Cys44/Cys67.

Belongs to the DEFL family.

The protein resides in the secreted. This chain is Defensin-like protein 173 (LCR63), found in Arabidopsis thaliana (Mouse-ear cress).